The following is a 170-amino-acid chain: Shikimate kinase (170 aa).

15-20 (GTGKTT) is a binding site for ATP. T19 lines the Mg(2+) pocket. 3 residues coordinate substrate: D37, R61, and G82. Residue R120 coordinates ATP. R138 provides a ligand contact to substrate. Residue Q154 coordinates ATP.

This sequence belongs to the shikimate kinase family. As to quaternary structure, monomer. Requires Mg(2+) as cofactor.

It is found in the cytoplasm. It catalyses the reaction shikimate + ATP = 3-phosphoshikimate + ADP + H(+). The protein operates within metabolic intermediate biosynthesis; chorismate biosynthesis; chorismate from D-erythrose 4-phosphate and phosphoenolpyruvate: step 5/7. Its function is as follows. Catalyzes the specific phosphorylation of the 3-hydroxyl group of shikimic acid using ATP as a cosubstrate. In Staphylococcus epidermidis (strain ATCC 35984 / DSM 28319 / BCRC 17069 / CCUG 31568 / BM 3577 / RP62A), this protein is Shikimate kinase.